We begin with the raw amino-acid sequence, 80 residues long: Exodeoxyribonuclease 7 small subunit (80 aa).

It belongs to the XseB family. As to quaternary structure, heterooligomer composed of large and small subunits.

The protein localises to the cytoplasm. It carries out the reaction Exonucleolytic cleavage in either 5'- to 3'- or 3'- to 5'-direction to yield nucleoside 5'-phosphates.. Bidirectionally degrades single-stranded DNA into large acid-insoluble oligonucleotides, which are then degraded further into small acid-soluble oligonucleotides. This chain is Exodeoxyribonuclease 7 small subunit, found in Escherichia coli O139:H28 (strain E24377A / ETEC).